Here is a 96-residue protein sequence, read N- to C-terminus: Prokineticin Bm8-a (96 aa).

The signal sequence occupies residues 1–19 (MKCFAQIVVLLLVIAFSHG). 5 disulfides stabilise this stretch: cysteine 26–cysteine 38, cysteine 32–cysteine 50, cysteine 37–cysteine 78, cysteine 60–cysteine 86, and cysteine 80–cysteine 95.

Belongs to the AVIT (prokineticin) family. Expressed by the skin glands.

Its subcellular location is the secreted. In terms of biological role, potent agonist for both PKR1/PROKR1 and PKR2/PROKR2, and inducer of a potent and long-lasting hyperalgesia. Also potentiates capsaicin-induced TRPV1 current, when tested on DRG neurons. At subnanomolar concentrations, this protein both induces potent chemotaxis of macrophages and stimulates LPS-induced production of the pro-inflammatory cytokines IL-1 and IL-12. In vivo, potently stimulates the contraction of the guinea-pig gastrointestinal (GI) smooth muscle (nanomolar concentration). The polypeptide is Prokineticin Bm8-a (Bombina maxima (Giant fire-bellied toad)).